The sequence spans 487 residues: 1-aminocyclopropane-1-carboxylate synthase 1 (487 aa).

Lys286 carries the N6-(pyridoxal phosphate)lysine modification.

Belongs to the class-I pyridoxal-phosphate-dependent aminotransferase family. In terms of assembly, homodimer. Pyridoxal 5'-phosphate serves as cofactor.

The catalysed reaction is S-adenosyl-L-methionine = 1-aminocyclopropane-1-carboxylate + S-methyl-5'-thioadenosine + H(+). The protein operates within alkene biosynthesis; ethylene biosynthesis via S-adenosyl-L-methionine; ethylene from S-adenosyl-L-methionine: step 1/2. Catalyzes the formation of 1-aminocyclopropane-1-carboxylate, a direct precursor of ethylene in higher plants. This is 1-aminocyclopropane-1-carboxylate synthase 1 (ACC1) from Oryza sativa subsp. indica (Rice).